The chain runs to 145 residues: Sporulation-specific cell division protein Francci3_3418 (145 aa).

This sequence belongs to the SsgA family.

The protein localises to the cell septum. Involved in sporulation-specific cell division. This is Sporulation-specific cell division protein Francci3_3418 from Frankia casuarinae (strain DSM 45818 / CECT 9043 / HFP020203 / CcI3).